Here is a 293-residue protein sequence, read N- to C-terminus: Pyridoxal 5'-phosphate synthase subunit PdxS (293 aa).

Asp23 contributes to the D-ribose 5-phosphate binding site. Lys80 (schiff-base intermediate with D-ribose 5-phosphate) is an active-site residue. Residue Gly152 participates in D-ribose 5-phosphate binding. Arg164 provides a ligand contact to D-glyceraldehyde 3-phosphate. D-ribose 5-phosphate-binding positions include Gly213 and 234-235 (GS).

It belongs to the PdxS/SNZ family. In the presence of PdxT, forms a dodecamer of heterodimers.

The enzyme catalyses aldehydo-D-ribose 5-phosphate + D-glyceraldehyde 3-phosphate + L-glutamine = pyridoxal 5'-phosphate + L-glutamate + phosphate + 3 H2O + H(+). It participates in cofactor biosynthesis; pyridoxal 5'-phosphate biosynthesis. Catalyzes the formation of pyridoxal 5'-phosphate from ribose 5-phosphate (RBP), glyceraldehyde 3-phosphate (G3P) and ammonia. The ammonia is provided by the PdxT subunit. Can also use ribulose 5-phosphate and dihydroxyacetone phosphate as substrates, resulting from enzyme-catalyzed isomerization of RBP and G3P, respectively. The chain is Pyridoxal 5'-phosphate synthase subunit PdxS from Roseiflexus castenholzii (strain DSM 13941 / HLO8).